The following is a 314-amino-acid chain: MIOREX complex component 8 (314 aa).

The EngB-type G domain occupies Thr132–Leu312. GTP contacts are provided by residues Gly140–Ser147, Gly173–Thr177, Asp191–Gly194, Thr253–Asp256, and Ser290–Thr292. Ser147 and Thr175 together coordinate Mg(2+).

Belongs to the TRAFAC class TrmE-Era-EngA-EngB-Septin-like GTPase superfamily. EngB GTPase family. As to quaternary structure, associates with the mitochondrial ribosome. The cofactor is Mg(2+). Post-translationally, sumoylated upon ethanol stress.

The protein localises to the mitochondrion. Its function is as follows. Component of MIOREX complexes, large expressome-like assemblies of ribosomes with factors involved in all the steps of post-transcriptional gene expression. The polypeptide is MIOREX complex component 8 (Saccharomyces cerevisiae (strain ATCC 204508 / S288c) (Baker's yeast)).